The chain runs to 133 residues: Putative pre-16S rRNA nuclease (133 aa).

It belongs to the YqgF nuclease family.

Its subcellular location is the cytoplasm. Could be a nuclease involved in processing of the 5'-end of pre-16S rRNA. The sequence is that of Putative pre-16S rRNA nuclease from Dehalococcoides mccartyi (strain ATCC BAA-2266 / KCTC 15142 / 195) (Dehalococcoides ethenogenes (strain 195)).